The primary structure comprises 542 residues: Berberine bridge enzyme-like 25 (542 aa).

A signal peptide spans 1 to 30 (MGNSKPLPTISCISVFALYFSFYTITLTSS). An intrachain disulfide couples Cys40 to Cys104. The N-linked (GlcNAc...) asparagine glycan is linked to Asn61. Positions 82 to 258 (TMPKPGFIFK…LSWKIKLVPV (177 aa)) constitute an FAD-binding PCMH-type domain. His119 is subject to Pros-8alpha-FAD histidine. Residues Asn308 and Asn436 are each glycosylated (N-linked (GlcNAc...) asparagine).

This sequence belongs to the oxygen-dependent FAD-linked oxidoreductase family. FAD is required as a cofactor.

It localises to the secreted. The protein localises to the cell wall. This Arabidopsis thaliana (Mouse-ear cress) protein is Berberine bridge enzyme-like 25.